A 60-amino-acid chain; its full sequence is MGVPKRKTSKGRRDKRRAHLALSGPALAKCPQCNEMRLPHRVCPACGYYRDRAVLEFEEE.

Residues 1–19 (MGVPKRKTSKGRRDKRRAH) show a composition bias toward basic residues. Residues 1-20 (MGVPKRKTSKGRRDKRRAHL) are disordered.

Belongs to the bacterial ribosomal protein bL32 family.

This chain is Large ribosomal subunit protein bL32, found in Syntrophobacter fumaroxidans (strain DSM 10017 / MPOB).